The primary structure comprises 234 residues: Endonuclease NucS (234 aa).

It belongs to the NucS endonuclease family.

The protein localises to the cytoplasm. Functionally, cleaves both 3' and 5' ssDNA extremities of branched DNA structures. The protein is Endonuclease NucS of Bifidobacterium adolescentis (strain ATCC 15703 / DSM 20083 / NCTC 11814 / E194a).